We begin with the raw amino-acid sequence, 330 residues long: MGLTQDFFPPTSELLEGGNQTSTFEFLLWGLSDQPQQQHIFFLLFLWMYVVTVAGNLLIVLAIGTDTHLHTPMYFFLASLSCADIFSTSTTVPKALVNIQTQSRSISYAGCLAQLYFFLTFGDMDIFLPATMAYDRYVAICHLLHYMMIMSLHRCAFLVTACWTLTSLLAMTRTFLIFRLSLCSKILPGFFCDLGPLMKVSCSDAQVNELVLLFLGGAVILIPFMLILVSYIRIVSAILRAPSAQGRRKAFSTCDSHLVVVALFFGTVIRAYLCPSSSSSNSVKEDTAAAVMYTVVTPLLNPFIYSMRNKDMKAAVVRLLKGRVSFSQGQ.

The Extracellular portion of the chain corresponds to Met-1–His-39. N-linked (GlcNAc...) asparagine glycosylation occurs at Asn-19. Residues Ile-40–Val-60 form a helical membrane-spanning segment. At Leu-61–Thr-71 the chain is on the cytoplasmic side. Residues Pro-72 to Val-92 traverse the membrane as a helical segment. Topologically, residues Pro-93–Cys-111 are extracellular. A disulfide bridge connects residues Cys-111 and Cys-192. A helical transmembrane segment spans residues Leu-112–Met-132. Topologically, residues Ala-133 to Tyr-137 are cytoplasmic. Residues Val-138–Leu-158 form a helical membrane-spanning segment. Residues Val-159 to Glu-209 are Extracellular-facing. A helical membrane pass occupies residues Leu-210–Ser-230. Topologically, residues Tyr-231–His-257 are cytoplasmic. The chain crosses the membrane as a helical span at residues Leu-258–Ser-278. The Extracellular portion of the chain corresponds to Ser-279–Asp-286. A helical membrane pass occupies residues Thr-287 to Met-307. At Arg-308–Gln-330 the chain is on the cytoplasmic side.

Belongs to the G-protein coupled receptor 1 family.

The protein localises to the cell membrane. Odorant receptor. This is Olfactory receptor 1P1 (OR1P1) from Homo sapiens (Human).